The following is a 322-amino-acid chain: Beta-ketoacyl-[acyl-carrier-protein] synthase III (322 aa).

Catalysis depends on residues Cys113 and His247. The interval 248–252 is ACP-binding; it reads QANIR. Asn278 is an active-site residue.

This sequence belongs to the thiolase-like superfamily. FabH family. In terms of assembly, homodimer.

The protein localises to the cytoplasm. The enzyme catalyses malonyl-[ACP] + acetyl-CoA + H(+) = 3-oxobutanoyl-[ACP] + CO2 + CoA. Its pathway is lipid metabolism; fatty acid biosynthesis. In terms of biological role, catalyzes the condensation reaction of fatty acid synthesis by the addition to an acyl acceptor of two carbons from malonyl-ACP. Catalyzes the first condensation reaction which initiates fatty acid synthesis and may therefore play a role in governing the total rate of fatty acid production. Possesses both acetoacetyl-ACP synthase and acetyl transacylase activities. Its substrate specificity determines the biosynthesis of branched-chain and/or straight-chain of fatty acids. The protein is Beta-ketoacyl-[acyl-carrier-protein] synthase III of Tropheryma whipplei (strain TW08/27) (Whipple's bacillus).